Reading from the N-terminus, the 351-residue chain is Ion-translocating oxidoreductase complex subunit D (351 aa).

4 helical membrane passes run 18–38 (IMLLVILACIPGIIAQTYFFG), 40–60 (GSLIQVMLAMITALLAEGAVL), 87–107 (LPPLAPWWMIVLGTLFAIVIA), and 121–141 (PAMVGYVVLLISFPVQMTSWL). An FMN phosphoryl threonine modification is found at Thr185. Helical transmembrane passes span 211–231 (VLAGLGWQWVNTGFLVGGLLL), 241–261 (IPVSFLLALGGCAAVSWMIAP), 264–284 (FASPMLHLFSGATMLGAFFIA), 298–318 (LIFGALIGILVWLIRVYGGYP), and 321–341 (VAFAVLLANITVPLIDHYTQP).

The protein belongs to the NqrB/RnfD family. As to quaternary structure, the complex is composed of six subunits: RnfA, RnfB, RnfC, RnfD, RnfE and RnfG. It depends on FMN as a cofactor.

The protein localises to the cell inner membrane. Functionally, part of a membrane-bound complex that couples electron transfer with translocation of ions across the membrane. The chain is Ion-translocating oxidoreductase complex subunit D from Yersinia pestis.